A 220-amino-acid polypeptide reads, in one-letter code: Adenylate kinase (220 aa).

10 to 15 (GSGKST) provides a ligand contact to ATP. The tract at residues 30–59 (SSGDLIRKEIAEGTPLGREMQAYLARGDLI) is NMP. AMP contacts are provided by residues serine 31, arginine 36, 57–59 (DLI), 83–86 (GYPR), and glutamine 90. Positions 124-161 (GRRICPKCGAVYHVEFNPPKIPGRCDVCGAELVQREDD) are LID. Arginine 125 serves as a coordination point for ATP. Positions 128 and 131 each coordinate Zn(2+). ATP is bound at residue 134 to 135 (VY). Positions 148 and 151 each coordinate Zn(2+). AMP-binding residues include arginine 158 and arginine 169. Glycine 197 contacts ATP.

This sequence belongs to the adenylate kinase family. Monomer.

It localises to the cytoplasm. It carries out the reaction AMP + ATP = 2 ADP. It functions in the pathway purine metabolism; AMP biosynthesis via salvage pathway; AMP from ADP: step 1/1. Its function is as follows. Catalyzes the reversible transfer of the terminal phosphate group between ATP and AMP. Plays an important role in cellular energy homeostasis and in adenine nucleotide metabolism. The chain is Adenylate kinase from Pyrococcus furiosus (strain ATCC 43587 / DSM 3638 / JCM 8422 / Vc1).